The sequence spans 291 residues: Protease HtpX homolog (291 aa).

The next 2 helical transmembrane spans lie at 4–24 and 38–58; these read IALF…VASL and LGAL…ISLL. Histidine 144 is a Zn(2+) binding site. Glutamate 145 is a catalytic residue. Histidine 148 contributes to the Zn(2+) binding site. The next 2 membrane-spanning stretches (helical) occupy residues 159–179 and 199–219; these read LIQG…GYAV and VTTI…VAWF. Residue glutamate 224 coordinates Zn(2+).

Belongs to the peptidase M48B family. Zn(2+) is required as a cofactor.

The protein localises to the cell inner membrane. The polypeptide is Protease HtpX homolog (Paracidovorax citrulli (strain AAC00-1) (Acidovorax citrulli)).